Consider the following 126-residue polypeptide: C-type natriuretic peptide (126 aa).

A signal peptide spans 1-23 (MHLSQLLACALLLTLLSLRPSEA). The segment at 20–71 (PSEAKPGAPPKVPRTPPAEELAEPQAAGGGQKKGDKAPGGGGANLKGDRSRL) is disordered. Residues 24–73 (KPGAPPKVPRTPPAEELAEPQAAGGGQKKGDKAPGGGGANLKGDRSRLLR) constitute a propeptide that is removed on maturation. Positions 26–35 (GAPPKVPRTP) are enriched in pro residues. Positions 46-63 (AGGGQKKGDKAPGGGGAN) are enriched in gly residues. Cys110 and Cys126 are disulfide-bonded.

The protein belongs to the natriuretic peptide family. Post-translationally, degraded by IDE (in vitro). As to expression, in the kidney, predominantly expressed in the distal tubular cells (at protein level).

Its subcellular location is the secreted. Hormone which plays a role in endochondral ossification through regulation of cartilaginous growth plate chondrocytes proliferation and differentiation. May also be vasoactive and natriuretic. Acts by specifically binding and stimulating NPR2 to produce cGMP. Binds the clearance receptor NPR3. The polypeptide is C-type natriuretic peptide (NPPC) (Homo sapiens (Human)).